Reading from the N-terminus, the 392-residue chain is Iripin-4 (392 aa).

Residues 1 to 16 (MRSLATFMSLLTICWG) form the signal peptide. Asn-104, Asn-130, and Asn-265 each carry an N-linked (GlcNAc...) asparagine glycan.

This sequence belongs to the serpin family. Female salivary gland.

Its subcellular location is the secreted. Its function is as follows. Serpin with unknown function. Weakly inhibits human granzyme B (GZMB). Acts as a substrate for porcine elastase. The polypeptide is Iripin-4 (Ixodes ricinus (Common tick)).